We begin with the raw amino-acid sequence, 543 residues long: Chaperonin GroEL 4 (543 aa).

Residues 29–32, 86–90, G411, 476–478, and D492 contribute to the ATP site; these read TLGP, DGTTT, and DAA.

It belongs to the chaperonin (HSP60) family. Forms a cylinder of 14 subunits composed of two heptameric rings stacked back-to-back. Interacts with the co-chaperonin GroES.

It is found in the cytoplasm. The enzyme catalyses ATP + H2O + a folded polypeptide = ADP + phosphate + an unfolded polypeptide.. Its function is as follows. Together with its co-chaperonin GroES, plays an essential role in assisting protein folding. The GroEL-GroES system forms a nano-cage that allows encapsulation of the non-native substrate proteins and provides a physical environment optimized to promote and accelerate protein folding. The protein is Chaperonin GroEL 4 of Bradyrhizobium diazoefficiens (strain JCM 10833 / BCRC 13528 / IAM 13628 / NBRC 14792 / USDA 110).